A 216-amino-acid chain; its full sequence is Adenylate kinase (216 aa).

An ATP-binding site is contributed by 10–15; sequence GAGKGT. An NMP region spans residues 30–59; that stretch reads STGDMLRAAVNAGTEVGKRAKAVMDAGKLV. AMP is bound by residues T31, R36, 57–59, 85–88, and Q92; these read KLV and GFPR. The tract at residues 126–163 is LID; it reads GRYTCAQCGTVYHDTDKVPVEEGVCDKCGSTHFKRRPD. Residue R127 coordinates ATP. Zn(2+)-binding residues include C130 and C133. An ATP-binding site is contributed by 136-137; the sequence is VY. C150 and C153 together coordinate Zn(2+). Positions 160 and 172 each coordinate AMP. Residue A200 coordinates ATP.

Belongs to the adenylate kinase family. As to quaternary structure, monomer.

The protein localises to the cytoplasm. The enzyme catalyses AMP + ATP = 2 ADP. It participates in purine metabolism; AMP biosynthesis via salvage pathway; AMP from ADP: step 1/1. Catalyzes the reversible transfer of the terminal phosphate group between ATP and AMP. Plays an important role in cellular energy homeostasis and in adenine nucleotide metabolism. This chain is Adenylate kinase, found in Rhizobium etli (strain ATCC 51251 / DSM 11541 / JCM 21823 / NBRC 15573 / CFN 42).